The following is a 240-amino-acid chain: LexA repressor (240 aa).

The H-T-H motif DNA-binding region spans 26–46 (FDEMKEALDLASKSGIHRLIT). Residues S161 and K199 each act as for autocatalytic cleavage activity in the active site.

This sequence belongs to the peptidase S24 family. As to quaternary structure, homodimer.

The catalysed reaction is Hydrolysis of Ala-|-Gly bond in repressor LexA.. Represses a number of genes involved in the response to DNA damage (SOS response), including recA and lexA. In the presence of single-stranded DNA, RecA interacts with LexA causing an autocatalytic cleavage which disrupts the DNA-binding part of LexA, leading to derepression of the SOS regulon and eventually DNA repair. This is LexA repressor from Brucella ovis (strain ATCC 25840 / 63/290 / NCTC 10512).